Reading from the N-terminus, the 373-residue chain is Queuine tRNA-ribosyltransferase (373 aa).

D89 functions as the Proton acceptor in the catalytic mechanism. Substrate contacts are provided by residues 89 to 93 (DSGGF), D143, Q185, and G212. The segment at 243–249 (GVGRPED) is RNA binding. Residue D262 is the Nucleophile of the active site. An RNA binding; important for wobble base 34 recognition region spans residues 267-271 (TRNAR). Zn(2+)-binding residues include C300, C302, C305, and H331.

It belongs to the queuine tRNA-ribosyltransferase family. In terms of assembly, homodimer. Within each dimer, one monomer is responsible for RNA recognition and catalysis, while the other monomer binds to the replacement base PreQ1. Zn(2+) is required as a cofactor.

It catalyses the reaction 7-aminomethyl-7-carbaguanine + guanosine(34) in tRNA = 7-aminomethyl-7-carbaguanosine(34) in tRNA + guanine. The protein operates within tRNA modification; tRNA-queuosine biosynthesis. Functionally, catalyzes the base-exchange of a guanine (G) residue with the queuine precursor 7-aminomethyl-7-deazaguanine (PreQ1) at position 34 (anticodon wobble position) in tRNAs with GU(N) anticodons (tRNA-Asp, -Asn, -His and -Tyr). Catalysis occurs through a double-displacement mechanism. The nucleophile active site attacks the C1' of nucleotide 34 to detach the guanine base from the RNA, forming a covalent enzyme-RNA intermediate. The proton acceptor active site deprotonates the incoming PreQ1, allowing a nucleophilic attack on the C1' of the ribose to form the product. After dissociation, two additional enzymatic reactions on the tRNA convert PreQ1 to queuine (Q), resulting in the hypermodified nucleoside queuosine (7-(((4,5-cis-dihydroxy-2-cyclopenten-1-yl)amino)methyl)-7-deazaguanosine). The sequence is that of Queuine tRNA-ribosyltransferase from Marinobacter nauticus (strain ATCC 700491 / DSM 11845 / VT8) (Marinobacter aquaeolei).